A 238-amino-acid polypeptide reads, in one-letter code: Ribonuclease PH (238 aa).

Residues arginine 86 and 124–126 (GTR) contribute to the phosphate site.

The protein belongs to the RNase PH family. As to quaternary structure, homohexameric ring arranged as a trimer of dimers.

The catalysed reaction is tRNA(n+1) + phosphate = tRNA(n) + a ribonucleoside 5'-diphosphate. Functionally, phosphorolytic 3'-5' exoribonuclease that plays an important role in tRNA 3'-end maturation. Removes nucleotide residues following the 3'-CCA terminus of tRNAs; can also add nucleotides to the ends of RNA molecules by using nucleoside diphosphates as substrates, but this may not be physiologically important. Probably plays a role in initiation of 16S rRNA degradation (leading to ribosome degradation) during starvation. The protein is Ribonuclease PH of Haemophilus influenzae (strain PittGG).